The primary structure comprises 273 residues: NADPH-dependent 7-cyano-7-deazaguanine reductase (273 aa).

81 to 83 (VES) lines the substrate pocket. 83–84 (SK) contacts NADPH. The Thioimide intermediate role is filled by Cys179. Asp186 (proton donor) is an active-site residue. 218 to 219 (AE) provides a ligand contact to substrate. NADPH is bound at residue 247–248 (RG).

It belongs to the GTP cyclohydrolase I family. QueF type 2 subfamily. As to quaternary structure, homodimer.

It localises to the cytoplasm. The catalysed reaction is 7-aminomethyl-7-carbaguanine + 2 NADP(+) = 7-cyano-7-deazaguanine + 2 NADPH + 3 H(+). Its pathway is tRNA modification; tRNA-queuosine biosynthesis. In terms of biological role, catalyzes the NADPH-dependent reduction of 7-cyano-7-deazaguanine (preQ0) to 7-aminomethyl-7-deazaguanine (preQ1). The chain is NADPH-dependent 7-cyano-7-deazaguanine reductase from Rickettsia prowazekii (strain Madrid E).